The chain runs to 100 residues: Large ribosomal subunit protein uL23 (100 aa).

The protein belongs to the universal ribosomal protein uL23 family. As to quaternary structure, part of the 50S ribosomal subunit. Contacts protein L29, and trigger factor when it is bound to the ribosome.

In terms of biological role, one of the early assembly proteins it binds 23S rRNA. One of the proteins that surrounds the polypeptide exit tunnel on the outside of the ribosome. Forms the main docking site for trigger factor binding to the ribosome. This Kosmotoga olearia (strain ATCC BAA-1733 / DSM 21960 / TBF 19.5.1) protein is Large ribosomal subunit protein uL23.